The sequence spans 559 residues: 3-phosphoinositide-dependent protein kinase 1 (559 aa).

Tyr-9 is modified (phosphotyrosine; by SRC and INSR). Ser-25 bears the Phosphoserine mark. A disordered region spans residues 25-83 (SPSMVRSQTEPSSSPGIPSGVSRQGSTMDGTTAEARPSTNPLQQHPAQLPPQPRKKRPE). Positions 35–46 (PSSSPGIPSGVS) are enriched in low complexity. A Protein kinase domain is found at 85-345 (FKFGKILGEG…YGPLKAHPFF (261 aa)). ATP contacts are provided by residues 95 to 97 (SFS) and Lys-114. Residues 116–160 (LEKRHIIKENKVPYVTRERDVMSRLDHPFFVKLYFTFQDDEKLYF) are PIF-pocket. Residues 163-165 (SYA) and Glu-169 contribute to the ATP site. Asp-208 serves as the catalytic Proton acceptor. ATP contacts are provided by Glu-212 and Asp-226. Ser-244 is subject to Phosphoserine. Lys-307 carries the N6-acetyllysine modification. Thr-357 is subject to Phosphothreonine; by MELK. A phosphotyrosine; by SRC and INSR mark is found at Tyr-376 and Tyr-379. The residue at position 396 (Ser-396) is a Phosphoserine. Phosphoserine; by MAP3K5 is present on Ser-397. Phosphoserine is present on Ser-399. Ser-401 is subject to Phosphoserine; by MAP3K5. At Ser-413 the chain carries Phosphoserine. One can recognise a PH domain in the interval 462–553 (KMGPVDKRKG…EVWRQQYQSS (92 aa)). At Ser-504 the chain carries Phosphoserine; by PKC/PRKCQ. At Thr-516 the chain carries Phosphothreonine; by autocatalysis. Ser-532 is modified (phosphoserine; by PKC/PRKCQ).

The protein belongs to the protein kinase superfamily. AGC Ser/Thr protein kinase family. PDPK1 subfamily. As to quaternary structure, homodimer in its autoinhibited state. Active as monomer. Interacts with NPRL2, PPARG, PAK1, PTK2B, GRB14, PKN1 (via C-terminus), STRAP and IKKB. The Tyr-9 phosphorylated form interacts with SRC, RASA1 and CRK (via their SH2 domains). Interacts with SGK3 in a phosphorylation-dependent manner. The tyrosine-phosphorylated form interacts with PTPN6. The Ser-244 phosphorylated form interacts with YWHAH and YWHAQ. Binds INSR in response to insulin. Interacts (via PH domain) with SMAD3, SMAD4 and SMAD7. Interacts with PKN2; the interaction stimulates PDPK1 autophosphorylation, its PI(3,4,5)P3-dependent kinase activity toward 'Ser-473' of AKT1 but also activates its kinase activity toward PRKCD and PRKCZ. Post-translationally, phosphorylation on Ser-244 in the activation loop is required for full activity. PDPK1 itself can autophosphorylate Ser-244, leading to its own activation. Autophosphorylation is inhibited by the apoptotic C-terminus cleavage product of PKN2. Tyr-9 phosphorylation is critical for stabilization of both PDPK1 and the PDPK1/SRC complex via HSP90-mediated protection of PDPK1 degradation. Angiotensin II stimulates the tyrosine phosphorylation of PDPK1 in vascular smooth muscle in a calcium- and SRC-dependent manner. Phosphorylated on Tyr-9, Tyr-376 and Tyr-379 by INSR in response to insulin. Palmitate negatively regulates autophosphorylation at Ser-244 and palmitate-induced phosphorylation at Ser-532 and Ser-504 by PKC/PRKCQ negatively regulates its ability to phosphorylate PKB/AKT1. Phosphorylation at Thr-357 by MELK partially inhibits kinase activity, the inhibition is cooperatively enhanced by phosphorylation at Ser-397 and Ser-401 by MAP3K5. In terms of processing, monoubiquitinated in the kinase domain, deubiquitinated by USP4.

It localises to the cytoplasm. The protein resides in the nucleus. Its subcellular location is the cell membrane. The protein localises to the cell junction. It is found in the focal adhesion. The catalysed reaction is L-seryl-[protein] + ATP = O-phospho-L-seryl-[protein] + ADP + H(+). The enzyme catalyses L-threonyl-[protein] + ATP = O-phospho-L-threonyl-[protein] + ADP + H(+). Its activity is regulated as follows. Homodimerization regulates its activity by maintaining the kinase in an autoinhibitory conformation. NPRL2 down-regulates its activity by interfering with tyrosine phosphorylation at the Tyr-9, Tyr-376 and Tyr-379 residues. The 14-3-3 protein YWHAQ acts as a negative regulator by association with the residues surrounding the Ser-244 residue. STRAP positively regulates its activity by enhancing its autophosphorylation and by stimulating its dissociation from YWHAQ. SMAD2, SMAD3, SMAD4 and SMAD7 also positively regulate its activity by stimulating its dissociation from YWHAQ. Activated by phosphorylation on Tyr-9, Tyr-376 and Tyr-379 by INSR in response to insulin. Serine/threonine kinase which acts as a master kinase, phosphorylating and activating a subgroup of the AGC family of protein kinases. Its targets include: protein kinase B (PKB/AKT1, PKB/AKT2, PKB/AKT3), p70 ribosomal protein S6 kinase (RPS6KB1), p90 ribosomal protein S6 kinase (RPS6KA1, RPS6KA2 and RPS6KA3), cyclic AMP-dependent protein kinase (PRKACA), protein kinase C (PRKCD and PRKCZ), serum and glucocorticoid-inducible kinase (SGK1, SGK2 and SGK3), p21-activated kinase-1 (PAK1), TSSK3, protein kinase PKN (PKN1 and PKN2). Plays a central role in the transduction of signals from insulin by providing the activating phosphorylation to PKB/AKT1, thus propagating the signal to downstream targets controlling cell proliferation and survival, as well as glucose and amino acid uptake and storage. Negatively regulates the TGF-beta-induced signaling by: modulating the association of SMAD3 and SMAD7 with TGF-beta receptor, phosphorylating SMAD2, SMAD3, SMAD4 and SMAD7, preventing the nuclear translocation of SMAD3 and SMAD4 and the translocation of SMAD7 from the nucleus to the cytoplasm in response to TGF-beta. Activates PPARG transcriptional activity and promotes adipocyte differentiation. Activates the NF-kappa-B pathway via phosphorylation of IKKB. The tyrosine phosphorylated form is crucial for the regulation of focal adhesions by angiotensin II. Controls proliferation, survival, and growth of developing pancreatic cells. Participates in the regulation of Ca(2+) entry and Ca(2+)-activated K(+) channels of mast cells. Essential for the motility of vascular endothelial cells (ECs) and is involved in the regulation of their chemotaxis. Plays a critical role in cardiac homeostasis by serving as a dual effector for cell survival and beta-adrenergic response. Plays an important role during thymocyte development by regulating the expression of key nutrient receptors on the surface of pre-T cells and mediating Notch-induced cell growth and proliferative responses. Provides negative feedback inhibition to toll-like receptor-mediated NF-kappa-B activation in macrophages. In Rattus norvegicus (Rat), this protein is 3-phosphoinositide-dependent protein kinase 1 (Pdpk1).